Reading from the N-terminus, the 426-residue chain is 4-hydroxy-3-methylbut-2-en-1-yl diphosphate synthase (flavodoxin) (426 aa).

Cysteine 320, cysteine 323, cysteine 366, and glutamate 373 together coordinate [4Fe-4S] cluster.

This sequence belongs to the IspG family. [4Fe-4S] cluster is required as a cofactor.

The catalysed reaction is (2E)-4-hydroxy-3-methylbut-2-enyl diphosphate + oxidized [flavodoxin] + H2O + 2 H(+) = 2-C-methyl-D-erythritol 2,4-cyclic diphosphate + reduced [flavodoxin]. It functions in the pathway isoprenoid biosynthesis; isopentenyl diphosphate biosynthesis via DXP pathway; isopentenyl diphosphate from 1-deoxy-D-xylulose 5-phosphate: step 5/6. In terms of biological role, converts 2C-methyl-D-erythritol 2,4-cyclodiphosphate (ME-2,4cPP) into 1-hydroxy-2-methyl-2-(E)-butenyl 4-diphosphate. This is 4-hydroxy-3-methylbut-2-en-1-yl diphosphate synthase (flavodoxin) from Wolbachia sp. subsp. Drosophila simulans (strain wRi).